A 219-amino-acid chain; its full sequence is Flagellar transcriptional regulator FlhC (219 aa).

Residues Cys137, Cys140, Cys157, and Cys160 each contribute to the Zn(2+) site.

Belongs to the FlhC family. As to quaternary structure, heterohexamer composed of two FlhC and four FlhD subunits. Each FlhC binds a FlhD dimer, forming a heterotrimer, and a hexamer assembles by dimerization of two heterotrimers. Requires Zn(2+) as cofactor.

It is found in the cytoplasm. Functionally, functions in complex with FlhD as a master transcriptional regulator that regulates transcription of several flagellar and non-flagellar operons by binding to their promoter region. Activates expression of class 2 flagellar genes, including fliA, which is a flagellum-specific sigma factor that turns on the class 3 genes. Also regulates genes whose products function in a variety of physiological pathways. The protein is Flagellar transcriptional regulator FlhC of Paraburkholderia phymatum (strain DSM 17167 / CIP 108236 / LMG 21445 / STM815) (Burkholderia phymatum).